The following is a 328-amino-acid chain: Solute-binding protein Bamb_6123 (328 aa).

An N-terminal signal peptide occupies residues 1 to 26; that stretch reads MTHRFPRSRTALAVALMAGFAMSAQA. The beta-D-galacturonate site is built by histidine 35, glutamate 73, arginine 89, arginine 149, asparagine 209, and glutamate 236. Histidine 35, glutamate 73, arginine 89, arginine 149, asparagine 209, and glutamate 236 together coordinate beta-D-glucuronate.

The protein belongs to the bacterial solute-binding protein 7 family. The complex is comprised of an extracytoplasmic solute-binding protein and a heteromeric permease formed by two transmembrane proteins.

The protein resides in the periplasm. Functionally, solute-binding protein that binds D-galacturonate and D-glucuronate (in vitro). Probably part of a tripartite ATP-independent periplasmic (TRAP) transport system that mediates solute transport into the cytoplasm. The chain is Solute-binding protein Bamb_6123 from Burkholderia ambifaria (strain ATCC BAA-244 / DSM 16087 / CCUG 44356 / LMG 19182 / AMMD) (Burkholderia cepacia (strain AMMD)).